Consider the following 310-residue polypeptide: Putative S-adenosyl-L-methionine-dependent methyltransferase MMAR_0356 (310 aa).

S-adenosyl-L-methionine contacts are provided by residues aspartate 137 and 166 to 167; that span reads DL.

The protein belongs to the UPF0677 family.

In terms of biological role, exhibits S-adenosyl-L-methionine-dependent methyltransferase activity. This Mycobacterium marinum (strain ATCC BAA-535 / M) protein is Putative S-adenosyl-L-methionine-dependent methyltransferase MMAR_0356.